The primary structure comprises 396 residues: Elongation factor Tu (396 aa).

One can recognise a tr-type G domain in the interval 10–206 (KPHVNIGTIG…AVDESVPEPV (197 aa)). Residues 19–26 (GHVDHGKT) form a G1 region. 19–26 (GHVDHGKT) contacts GTP. Threonine 26 lines the Mg(2+) pocket. Positions 62 to 66 (GITIN) are G2. Residues 83 to 86 (DAPG) are G3. GTP contacts are provided by residues 83–87 (DAPGH) and 138–141 (NKSD). The tract at residues 138-141 (NKSD) is G4. The G5 stretch occupies residues 176–178 (SGL).

Belongs to the TRAFAC class translation factor GTPase superfamily. Classic translation factor GTPase family. EF-Tu/EF-1A subfamily. Monomer.

The protein resides in the cytoplasm. The enzyme catalyses GTP + H2O = GDP + phosphate + H(+). GTP hydrolase that promotes the GTP-dependent binding of aminoacyl-tRNA to the A-site of ribosomes during protein biosynthesis. The sequence is that of Elongation factor Tu from Beutenbergia cavernae (strain ATCC BAA-8 / DSM 12333 / CCUG 43141 / JCM 11478 / NBRC 16432 / NCIMB 13614 / HKI 0122).